The following is a 214-amino-acid chain: External core antigen (214 aa).

Residues 1–19 (MQLFHLCLIISCTCPTLQA) form the signal peptide. The interval 25–27 (GWL) is HBEAG. The tract at residues 164-214 (PNAPILSTLPETTVVRRRDRGRSPRRRTPSPRRRRSQSPRRRRSQSRESQC) is disordered. Basic residues predominate over residues 178–207 (VRRRDRGRSPRRRTPSPRRRRSQSPRRRRS). One copy of the 1; half-length repeat lies at 186-192 (SPRRRTP). The segment at 186–208 (SPRRRTPSPRRRRSQSPRRRRSQ) is 3 X 8 AA repeats of S-P-R-R-R-R-S-Q. Positions 186–214 (SPRRRTPSPRRRRSQSPRRRRSQSRESQC) are excised as a propeptide. Tandem repeats lie at residues 193 to 200 (SPRRRRSQ) and 201 to 208 (SPRRRRSQ).

It belongs to the orthohepadnavirus precore antigen family. In terms of assembly, homodimerizes. Phosphorylated. In terms of processing, cleaved by host furin.

It localises to the secreted. Its subcellular location is the host nucleus. May regulate immune response to the intracellular capsid in acting as a T-cell tolerogen, by having an immunoregulatory effect which prevents destruction of infected cells by cytotoxic T-cells. This immune regulation may predispose to chronicity during perinatal infections and prevent severe liver injury during adult infections. The polypeptide is External core antigen (Homo sapiens (Human)).